The following is a 218-amino-acid chain: MFALKFILITSFIASTALAHFTLDFPESRGFVSDIEGQFCGGFSTVGPRQPFPLGSGPVHINSHHSLATVVAFISTSSNPTSFDDFNTTSNGTIIPLASNIFQVTQGEKCFNIDLESLNVGLTNGSEVTLQIQYDGGDGDLYQCSDLVLIQGYEVPSNETCTDDASRTSNASSTSSGSATATSAAATSSSSGTSGAIKEVVGLGALSLALGIAGLIIL.

Positions 1–19 (MFALKFILITSFIASTALA) are cleaved as a signal peptide. Cu(2+)-binding residues include histidine 20 and histidine 65. Intrachain disulfides connect cysteine 40/cysteine 144 and cysteine 110/cysteine 161. 3 N-linked (GlcNAc...) asparagine glycosylation sites follow: asparagine 87, asparagine 91, and asparagine 124. Residue aspartate 138 participates in Cu(2+) binding. N-linked (GlcNAc...) asparagine glycans are attached at residues asparagine 158 and asparagine 170. A disordered region spans residues 160-194 (TCTDDASRTSNASSTSSGSATATSAAATSSSSGTS). Residues 167–194 (RTSNASSTSSGSATATSAAATSSSSGTS) show a composition bias toward low complexity. Serine 190 is lipidated: GPI-anchor amidated serine. Residues 191 to 218 (SGTSGAIKEVVGLGALSLALGIAGLIIL) constitute a propeptide, removed in mature form.

It belongs to the X325 family. The cofactor is Cu(2+).

It localises to the cell membrane. Its function is as follows. Lytic polysaccharide monooxygenase-like protein that has diverged to biological functions other than polysaccharide degradation since it does not perform oxidative cleavage of polysaccharides. Cell surface-bound protein that functions in the copper-accumulation pathway shared by the CUF1-dependent copper transporter CTR1. Involved in maintaining cell wall integrity during copper deficiency. Binds Cu(2+) with an estimated 1:1 stoichiometry and might serve as an extracellular copper ligand. FRE4 and FRE7 metalloreductases probably function together with CTR1 and BIM1 to liberate the Cu(2+) bound to the BIM1 copper-binding site for subsequent import of Cu(+) into the cell by CTR1, via the reduction of BIM1-bound Cu(2+) to Cu(+) to reduce binding affinity for BIM1 but increase affinity for CTR1. Facilitates copper acquisition in the brain of mammalian hosts and acts as a copper-dependent virulence trait in fungal meningitis. While BIM1 plays a critical role in cryptococcal meningitis, at least in part through its role in copper acquisition, it could play additional roles during copper limitation or as a means to invade and colonize host tissues in the brain, by compromising host carbohydrate integrity via its lytic polysaccharide monooxygenase (LPMO) activity, which has still to be determined. This Cryptococcus neoformans var. neoformans serotype D (strain JEC21 / ATCC MYA-565) (Filobasidiella neoformans) protein is Copper acquisition factor BIM1.